Here is a 476-residue protein sequence, read N- to C-terminus: Cysteine--tRNA ligase (476 aa).

Cysteine 29 lines the Zn(2+) pocket. Residues 31 to 41 (PTVYDYTHLGH) carry the 'HIGH' region motif. Cysteine 209, histidine 234, and glutamate 238 together coordinate Zn(2+). The 'KMSKS' region motif lies at 266-270 (KMSKS). Residue lysine 269 coordinates ATP.

The protein belongs to the class-I aminoacyl-tRNA synthetase family. It depends on Zn(2+) as a cofactor.

It localises to the cytoplasm. It carries out the reaction tRNA(Cys) + L-cysteine + ATP = L-cysteinyl-tRNA(Cys) + AMP + diphosphate. In Thermococcus onnurineus (strain NA1), this protein is Cysteine--tRNA ligase.